A 132-amino-acid chain; its full sequence is Small ribosomal subunit protein uS8 (132 aa).

Belongs to the universal ribosomal protein uS8 family. Part of the 30S ribosomal subunit. Contacts proteins S5 and S12.

In terms of biological role, one of the primary rRNA binding proteins, it binds directly to 16S rRNA central domain where it helps coordinate assembly of the platform of the 30S subunit. The chain is Small ribosomal subunit protein uS8 from Clostridium botulinum (strain ATCC 19397 / Type A).